A 213-amino-acid chain; its full sequence is Guanylate kinase (213 aa).

The Guanylate kinase-like domain maps to 10-189; that stretch reads GLLLMVVAPS…AYADLAHIYH (180 aa). 17-24 provides a ligand contact to ATP; that stretch reads APSGVGKT.

It belongs to the guanylate kinase family.

It is found in the cytoplasm. The enzyme catalyses GMP + ATP = GDP + ADP. In terms of biological role, essential for recycling GMP and indirectly, cGMP. This Caulobacter vibrioides (strain ATCC 19089 / CIP 103742 / CB 15) (Caulobacter crescentus) protein is Guanylate kinase (gmk).